Here is a 208-residue protein sequence, read N- to C-terminus: UPF0323 lipoprotein HH_0014 (208 aa).

The signal sequence occupies residues 1–26; the sequence is MKHIHKIKNYAMVGGLGVMAVFALNA. Cysteine 27 is lipidated: N-palmitoyl cysteine. Cysteine 27 carries S-diacylglycerol cysteine lipidation. The disordered stretch occupies residues 148 to 208; that stretch reads ANSQRNYKSP…TNRNTGSMGS (61 aa). Low complexity-rich tracts occupy residues 169–185 and 193–208; these read SAKTGASGASKTSSGKS and SSQSTSTNRNTGSMGS.

This sequence belongs to the UPF0323 family.

It is found in the cell membrane. The sequence is that of UPF0323 lipoprotein HH_0014 from Helicobacter hepaticus (strain ATCC 51449 / 3B1).